The primary structure comprises 1381 residues: DNA-directed RNA polymerase subunit beta' (1381 aa).

Residues cysteine 70, cysteine 72, cysteine 85, and cysteine 88 each contribute to the Zn(2+) site. Mg(2+)-binding residues include aspartate 461, aspartate 463, and aspartate 465. 4 residues coordinate Zn(2+): cysteine 801, cysteine 875, cysteine 882, and cysteine 885. The disordered stretch occupies residues 1362 to 1381; the sequence is VEIEGDENSNKKSLDMHAAN. Positions 1369–1381 are enriched in basic and acidic residues; the sequence is NSNKKSLDMHAAN.

The protein belongs to the RNA polymerase beta' chain family. As to quaternary structure, the RNAP catalytic core consists of 2 alpha, 1 beta, 1 beta' and 1 omega subunit. When a sigma factor is associated with the core the holoenzyme is formed, which can initiate transcription. The cofactor is Mg(2+). It depends on Zn(2+) as a cofactor.

The catalysed reaction is RNA(n) + a ribonucleoside 5'-triphosphate = RNA(n+1) + diphosphate. Functionally, DNA-dependent RNA polymerase catalyzes the transcription of DNA into RNA using the four ribonucleoside triphosphates as substrates. The sequence is that of DNA-directed RNA polymerase subunit beta' from Syntrophus aciditrophicus (strain SB).